Consider the following 279-residue polypeptide: Proto-oncogene FRAT1 (279 aa).

Disordered regions lie at residues 1–24 (MPCR…EEDS) and 56–76 (AQHS…APGP). A compositionally biased stretch (acidic residues) spans 7-24 (EEEEAGEEAEGEEEEEDS). Serine 88 is subject to Phosphoserine. 2 disordered regions span residues 136–200 (GPSA…DDPH) and 228–279 (RAKL…VPGS). The tract at residues 198–220 (DPHRLLQQLVLSGNLIKEAVRRL) is involved in GSK-3 binding. 2 positions are modified to phosphoserine: serine 249 and serine 252.

It belongs to the GSK-3-binding protein family. In terms of assembly, binds DVL1. Binds GSK-3 and prevent GSK-3-dependent phosphorylation. Phosphorylated.

It is found in the cytoplasm. Positively regulates the Wnt signaling pathway by stabilizing beta-catenin through the association with GSK-3. May play a role in tumor progression and collaborate with PIM1 and MYC in lymphomagenesis. The polypeptide is Proto-oncogene FRAT1 (FRAT1) (Homo sapiens (Human)).